The following is a 230-amino-acid chain: Sugar fermentation stimulation protein homolog (230 aa).

It belongs to the SfsA family.

The chain is Sugar fermentation stimulation protein homolog from Clostridium perfringens (strain 13 / Type A).